The following is a 728-amino-acid chain: Catalase-peroxidase (728 aa).

Positions 91-218 (WHSAGTYRTA…LAAVQMGLIY (128 aa)) form a cross-link, tryptophyl-tyrosyl-methioninium (Trp-Tyr) (with M-244). His92 serves as the catalytic Proton acceptor. Residues 218 to 244 (YVNPEGPDGNPDPVAAARDIRDTFARM) constitute a cross-link (tryptophyl-tyrosyl-methioninium (Tyr-Met) (with W-91)). His259 lines the heme b pocket.

The protein belongs to the peroxidase family. Peroxidase/catalase subfamily. As to quaternary structure, homodimer or homotetramer. It depends on heme b as a cofactor. In terms of processing, formation of the three residue Trp-Tyr-Met cross-link is important for the catalase, but not the peroxidase activity of the enzyme.

The catalysed reaction is H2O2 + AH2 = A + 2 H2O. It carries out the reaction 2 H2O2 = O2 + 2 H2O. Functionally, bifunctional enzyme with both catalase and broad-spectrum peroxidase activity. The protein is Catalase-peroxidase of Burkholderia thailandensis (strain ATCC 700388 / DSM 13276 / CCUG 48851 / CIP 106301 / E264).